We begin with the raw amino-acid sequence, 142 residues long: Transcriptional regulator MraZ (142 aa).

SpoVT-AbrB domains follow at residues 5–51 and 77–120; these read ASAL…PRPE and AADV…DAAT.

It belongs to the MraZ family. As to quaternary structure, forms oligomers.

The protein localises to the cytoplasm. The protein resides in the nucleoid. The polypeptide is Transcriptional regulator MraZ (Ralstonia pickettii (strain 12J)).